The sequence spans 215 residues: UPF0502 protein YceH (215 aa).

At Lys-80 the chain carries N6-acetyllysine.

It belongs to the UPF0502 family.

This Shigella sonnei (strain Ss046) protein is UPF0502 protein YceH.